The sequence spans 552 residues: MPVAATNSESAMQQVLDNLGSLPNATGAAELDLIFLRGIMESPIVRSLAKAHERLEETKLEAVRDNNLELVQEILRDLAELAEQSSTAAELARILQEPHFQSLLETHDSVASKTYETPPPSPGLDPTFSNQPVPPDAVRMVGIRKTAGEHLGVTFRVEGGELVIARILHGGMVAQQGLLHVGDIIKEVNGQPVGSDPRALQELLRSASGSVILKILPSYQEPHLPRQVFVKCHFDYDPARDSLSPCKEAGLRFNAGDLLQIVNQDDANWWQACHVEGGSAGLIPSQLLEEKRKAFVKRDLELTPTSGTLCGSLSGKKKKRMMYLTTKNAEFDRHELLIYEEVARMPPFRRKTLVLIGAQGVGRRSLKNKLILWDPDRYGTTVPYTSRRPKDSEREGQGYSFVSRGEMEADIRAGRYLEHGEYEGNLYGTRIDSIRGVVASGKVCVLDVNPQAVKVLRTAEFVPYVVFIEAPDYETLRAMNRAALESGVSTKQLTEADLRRTVEESSRIQRGYGHYFDLSLVNSNLERTFRELQTAMEKLRTEPQWVPVSWVY.

2 L27 domains span residues 8-59 (SESA…EETK) and 60-118 (LEAV…YETP). Phosphoserine is present on S42. Phosphothreonine is present on T117. S121 bears the Phosphoserine mark. The PDZ domain occupies 140 to 219 (MVGIRKTAGE…SVILKILPSY (80 aa)). The SH3 domain maps to 225 to 293 (PRQVFVKCHF…PSQLLEEKRK (69 aa)). Residues 350-537 (RKTLVLIGAQ…TFRELQTAME (188 aa)) enclose the Guanylate kinase-like domain.

The protein belongs to the MAGUK family. As to quaternary structure, can homomultimerise. Interacts with CACNG2. Interacts (via the SH3-Guanylate kinase-like sub-module) with DLG4/PSD95 and DLGAP1/GKAP. Interacts (via the PDZ domain) with CADM1 (via C-terminus). Interacts with KCNN2/SK2 (via N-terminal domain). Interacts with SRC. Post-translationally, phosphorylated by SRC. As to expression, expressed in pyramidal neurons of CA1 region of the hippocampus.

It is found in the cell projection. Its subcellular location is the dendrite. The protein localises to the postsynaptic density. The protein resides in the cytoplasm. It localises to the cytoskeleton. It is found in the membrane. Functionally, postsynaptic MAGUK scaffold protein that links CADM1 cell adhesion molecules to core components of the postsynaptic density. In CA1 pyramidal neurons, required for synaptic KCNN2-containing channel function and long-term potentiation expression. Seems to negatively regulate SRC function in epithelial cells. The protein is MAGUK p55 subfamily member 2 of Mus musculus (Mouse).